The chain runs to 309 residues: Malate dehydrogenase (309 aa).

NAD(+) contacts are provided by residues 8–13 (GAGLVG) and aspartate 33. Residues arginine 82 and arginine 88 each contribute to the substrate site. NAD(+) contacts are provided by residues asparagine 95 and 118–120 (VSN). Substrate is bound by residues asparagine 120 and arginine 151. Histidine 175 serves as the catalytic Proton acceptor.

Belongs to the LDH/MDH superfamily. MDH type 3 family.

The catalysed reaction is (S)-malate + NAD(+) = oxaloacetate + NADH + H(+). In terms of biological role, catalyzes the reversible oxidation of malate to oxaloacetate. The polypeptide is Malate dehydrogenase (Pseudomonas putida (strain GB-1)).